The chain runs to 378 residues: Putative zinc finger protein 302L (378 aa).

Residues 3 to 25 form a C2H2-type; degenerate zinc finger; sequence IVCEFCDKSFDSKSKVNAHQRTK.

This sequence belongs to the IIV-6 302L family.

The sequence is that of Putative zinc finger protein 302L from Invertebrate iridescent virus 6 (IIV-6).